The chain runs to 355 residues: 3-dehydroquinate synthase (355 aa).

Residues 67-72 (DGEIYK), 101-105 (GVIGD), 125-126 (TT), Lys-138, Lys-147, and 165-168 (FLNT) each bind NAD(+). 3 residues coordinate Zn(2+): Glu-180, His-243, and His-260.

This sequence belongs to the sugar phosphate cyclases superfamily. Dehydroquinate synthase family. Requires NAD(+) as cofactor. The cofactor is Co(2+). It depends on Zn(2+) as a cofactor.

It is found in the cytoplasm. It carries out the reaction 7-phospho-2-dehydro-3-deoxy-D-arabino-heptonate = 3-dehydroquinate + phosphate. The protein operates within metabolic intermediate biosynthesis; chorismate biosynthesis; chorismate from D-erythrose 4-phosphate and phosphoenolpyruvate: step 2/7. Catalyzes the conversion of 3-deoxy-D-arabino-heptulosonate 7-phosphate (DAHP) to dehydroquinate (DHQ). The sequence is that of 3-dehydroquinate synthase from Buchnera aphidicola subsp. Baizongia pistaciae (strain Bp).